Consider the following 97-residue polypeptide: Cytochrome c2 iso-2 (97 aa).

The heme c site is built by C10, C13, H14, and M75.

The protein belongs to the cytochrome c family. Post-translationally, binds 1 heme c group covalently per subunit.

Functionally, cytochrome c2 is found mainly in purple, non-sulfur, photosynthetic bacteria where it functions as the electron donor to the oxidized bacteriochlorophyll in the photophosphorylation pathway. However, it may also have a role in the respiratory chain and is found in some non-photosynthetic bacteria. This chain is Cytochrome c2 iso-2, found in Magnetospirillum molischianum (Rhodospirillum molischianum).